Consider the following 431-residue polypeptide: Serine/threonine-protein kinase Sgk1 (431 aa).

The segment at 1-60 is necessary for localization to the mitochondria; sequence MTVKTEAARGPLTYSRMRGMVAILIAFMKQRRMGLNDFIQKIANNSYACKHTEVQSILKI. Residues 66-92 are disordered; that stretch reads PELMNANPSPPPSPSQQINLGPSSNPH. Ser74 is modified (phosphoserine). Ser78 carries the phosphoserine; by MAPK7 modification. Residues 81–91 are compositionally biased toward polar residues; it reads QQINLGPSSNP. In terms of domain architecture, Protein kinase spans 98-355; the sequence is FHFLKVIGKG…FMEIRNHVFF (258 aa). ATP-binding positions include 104 to 112 and Lys127; that span reads IGKGSFGKV. A Nuclear localization signal motif is present at residues 131–141; sequence KKAILKKKEEK. Asp222 (proton acceptor) is an active-site residue. Thr256 bears the Phosphothreonine; by PDPK1 mark. The region spanning 356-431 is the AGC-kinase C-terminal domain; that stretch reads SLINWDDLIN…SYAPPMDSFL (76 aa). Residue Thr369 is modified to Phosphothreonine; by PKA. Residues Ser397, Ser401, and Ser422 each carry the phosphoserine modification.

This sequence belongs to the protein kinase superfamily. AGC Ser/Thr protein kinase family. Homodimer; disulfide-linked. Forms a trimeric complex with FBXW7 and NOTCH1. Interacts with MAPK3/ERK1, MAPK1/ERK2, MAP2K1/MEK1, MAP2K2/MEK2, NEDD4, NEDD4L, MAPT/TAU, MAPK7, CREB1, SLC9A3R2/NHERF2 and KCNJ1/ROMK1. Associates with the mammalian target of rapamycin complex 2 (mTORC2) via an interaction with MAPKAP1/SIN1. Regulated by phosphorylation. Activated by phosphorylation on Ser-422 by mTORC2, transforming it into a substrate for PDPK1 which phosphorylates it on Thr-256. Phosphorylation on Ser-397 and Ser-401 are also essential for its activity. Phosphorylation on Ser-78 by MAPK7 is required for growth factor-induced cell cycle progression. In terms of processing, ubiquitinated by NEDD4L; which promotes proteasomal degradation. Ubiquitinated by SYVN1 at the endoplasmic reticulum; which promotes rapid proteasomal degradation and maintains a high turnover rate in resting cells.

Its subcellular location is the cytoplasm. The protein localises to the nucleus. The protein resides in the endoplasmic reticulum membrane. It is found in the cell membrane. It localises to the mitochondrion. The enzyme catalyses L-seryl-[protein] + ATP = O-phospho-L-seryl-[protein] + ADP + H(+). It catalyses the reaction L-threonyl-[protein] + ATP = O-phospho-L-threonyl-[protein] + ADP + H(+). Two specific sites, one in the kinase domain (Thr-256) and the other in the C-terminal regulatory region (Ser-422), need to be phosphorylated for its full activation. Phosphorylation at Ser-397 and Ser-401 are also essential for its activity. Activated by WNK1, WNK2, WNK3 and WNK4; which promote phosphorylation by mTORC2. Its function is as follows. Serine/threonine-protein kinase which is involved in the regulation of a wide variety of ion channels, membrane transporters, cellular enzymes, transcription factors, neuronal excitability, cell growth, proliferation, survival, migration and apoptosis. Plays an important role in cellular stress response. Contributes to regulation of renal Na(+) retention, renal K(+) elimination, salt appetite, gastric acid secretion, intestinal Na(+)/H(+) exchange and nutrient transport, insulin-dependent salt sensitivity of blood pressure, salt sensitivity of peripheral glucose uptake, cardiac repolarization and memory consolidation. Up-regulates Na(+) channels: SCNN1A/ENAC, SCN5A and ASIC1/ACCN2, K(+) channels: KCNJ1/ROMK1, KCNA1-5, KCNQ1-5 and KCNE1, epithelial Ca(2+) channels: TRPV5 and TRPV6, chloride channels: BSND, CLCN2 and CFTR, glutamate transporters: SLC1A3/EAAT1, SLC1A2 /EAAT2, SLC1A1/EAAT3, SLC1A6/EAAT4 and SLC1A7/EAAT5, amino acid transporters: SLC1A5/ASCT2, SLC38A1/SN1 and SLC6A19, creatine transporter: SLC6A8, Na(+)/dicarboxylate cotransporter: SLC13A2/NADC1, Na(+)-dependent phosphate cotransporter: SLC34A2/NAPI-2B, glutamate receptor: GRIK2/GLUR6. Up-regulates carriers: SLC9A3/NHE3, SLC12A1/NKCC2, SLC12A3/NCC, SLC5A3/SMIT, SLC2A1/GLUT1, SLC5A1/SGLT1 and SLC15A2/PEPT2. Regulates enzymes: GSK3A/B, PMM2 and Na(+)/K(+) ATPase, and transcription factors: CTNNB1 and nuclear factor NF-kappa-B. Stimulates sodium transport into epithelial cells by enhancing the stability and expression of SCNN1A/ENAC. This is achieved by phosphorylating the NEDD4L ubiquitin E3 ligase, promoting its interaction with 14-3-3 proteins, thereby preventing it from binding to SCNN1A/ENAC and targeting it for degradation. Regulates store-operated Ca(+2) entry (SOCE) by stimulating ORAI1 and STIM1. Regulates KCNJ1/ROMK1 directly via its phosphorylation or indirectly via increased interaction with SLC9A3R2/NHERF2. Phosphorylates MDM2 and activates MDM2-dependent ubiquitination of p53/TP53. Phosphorylates MAPT/TAU and mediates microtubule depolymerization and neurite formation in hippocampal neurons. Phosphorylates SLC2A4/GLUT4 and up-regulates its activity. Phosphorylates APBB1/FE65 and promotes its localization to the nucleus. Phosphorylates MAPK1/ERK2 and activates it by enhancing its interaction with MAP2K1/MEK1 and MAP2K2/MEK2. Phosphorylates FBXW7 and plays an inhibitory role in the NOTCH1 signaling. Phosphorylates FOXO1 resulting in its relocalization from the nucleus to the cytoplasm. Phosphorylates FOXO3, promoting its exit from the nucleus and interference with FOXO3-dependent transcription. Phosphorylates BRAF and MAP3K3/MEKK3 and inhibits their activity. Phosphorylates SLC9A3/NHE3 in response to dexamethasone, resulting in its activation and increased localization at the cell membrane. Phosphorylates CREB1. Necessary for vascular remodeling during angiogenesis. In Oryctolagus cuniculus (Rabbit), this protein is Serine/threonine-protein kinase Sgk1 (SGK1).